The chain runs to 238 residues: Enolase-phosphatase E1 (238 aa).

Residues Asp-14 and Glu-16 each contribute to the Mg(2+) site. Substrate contacts are provided by residues Ser-128–Ser-129 and Lys-165. Asp-192 contributes to the Mg(2+) binding site.

It belongs to the HAD-like hydrolase superfamily. MasA/MtnC family. Monomer. Mg(2+) serves as cofactor.

It is found in the cytoplasm. The protein localises to the nucleus. The enzyme catalyses 5-methylsulfanyl-2,3-dioxopentyl phosphate + H2O = 1,2-dihydroxy-5-(methylsulfanyl)pent-1-en-3-one + phosphate. It participates in amino-acid biosynthesis; L-methionine biosynthesis via salvage pathway; L-methionine from S-methyl-5-thio-alpha-D-ribose 1-phosphate: step 3/6. Its pathway is amino-acid biosynthesis; L-methionine biosynthesis via salvage pathway; L-methionine from S-methyl-5-thio-alpha-D-ribose 1-phosphate: step 4/6. Its function is as follows. Bifunctional enzyme that catalyzes the enolization of 2,3-diketo-5-methylthiopentyl-1-phosphate (DK-MTP-1-P) into the intermediate 2-hydroxy-3-keto-5-methylthiopentenyl-1-phosphate (HK-MTPenyl-1-P), which is then dephosphorylated to form the acireductone 1,2-dihydroxy-3-keto-5-methylthiopentene (DHK-MTPene). The protein is Enolase-phosphatase E1 of Fusarium vanettenii (strain ATCC MYA-4622 / CBS 123669 / FGSC 9596 / NRRL 45880 / 77-13-4) (Fusarium solani subsp. pisi).